Here is a 367-residue protein sequence, read N- to C-terminus: DNA replication and repair protein RecF (367 aa).

30 to 37 is an ATP binding site; that stretch reads GANGSGKT.

It belongs to the RecF family.

The protein resides in the cytoplasm. Functionally, the RecF protein is involved in DNA metabolism; it is required for DNA replication and normal SOS inducibility. RecF binds preferentially to single-stranded, linear DNA. It also seems to bind ATP. In Pseudomonas savastanoi pv. phaseolicola (strain 1448A / Race 6) (Pseudomonas syringae pv. phaseolicola (strain 1448A / Race 6)), this protein is DNA replication and repair protein RecF.